We begin with the raw amino-acid sequence, 149 residues long: SsrA-binding protein (149 aa).

Residues Gly121–Arg149 form a disordered region. Residues Lys127–Arg149 show a composition bias toward basic and acidic residues.

It belongs to the SmpB family.

Its subcellular location is the cytoplasm. Its function is as follows. Required for rescue of stalled ribosomes mediated by trans-translation. Binds to transfer-messenger RNA (tmRNA), required for stable association of tmRNA with ribosomes. tmRNA and SmpB together mimic tRNA shape, replacing the anticodon stem-loop with SmpB. tmRNA is encoded by the ssrA gene; the 2 termini fold to resemble tRNA(Ala) and it encodes a 'tag peptide', a short internal open reading frame. During trans-translation Ala-aminoacylated tmRNA acts like a tRNA, entering the A-site of stalled ribosomes, displacing the stalled mRNA. The ribosome then switches to translate the ORF on the tmRNA; the nascent peptide is terminated with the 'tag peptide' encoded by the tmRNA and targeted for degradation. The ribosome is freed to recommence translation, which seems to be the essential function of trans-translation. This Dechloromonas aromatica (strain RCB) protein is SsrA-binding protein.